The sequence spans 576 residues: 60 kDa heat shock protein homolog 2, mitochondrial (576 aa).

Residues 1-61 (MMRMFRYTNT…AVTMGPKGRN (61 aa)) constitute a mitochondrion transit peptide.

Belongs to the chaperonin (HSP60) family. In terms of tissue distribution, first detectable expression is seen in the posterior part of the dorsal tracheal trunk at stage 14-15, which marks the beginning of terminal tracheation. In the larval gut, expression in proventriculus is stronger than in midgut and hindgut. Malpighian tubules shows low expression and late third instar larval imaginal disks and brain showed moderate expression. In larval ovary and testis, expression is strong in the posterior region.

The protein localises to the mitochondrion matrix. Functionally, prevents misfolding and promotes the refolding and proper assembly of unfolded polypeptides generated under stress conditions. Essential for proper development of trachea, spermatogonia and spermatocytes. The protein is 60 kDa heat shock protein homolog 2, mitochondrial (Hsp60C) of Drosophila melanogaster (Fruit fly).